The primary structure comprises 214 residues: Orotate phosphoribosyltransferase (214 aa).

Lys26 is a 5-phospho-alpha-D-ribose 1-diphosphate binding site. Orotate is bound at residue 34–35 (FF). Residues 72 to 73 (YK), Arg99, Lys100, Lys103, His105, and 124 to 132 (DDVITAGTA) contribute to the 5-phospho-alpha-D-ribose 1-diphosphate site. Residues Thr128 and Arg157 each contribute to the orotate site.

It belongs to the purine/pyrimidine phosphoribosyltransferase family. PyrE subfamily. In terms of assembly, homodimer. Mg(2+) is required as a cofactor.

The enzyme catalyses orotidine 5'-phosphate + diphosphate = orotate + 5-phospho-alpha-D-ribose 1-diphosphate. Its pathway is pyrimidine metabolism; UMP biosynthesis via de novo pathway; UMP from orotate: step 1/2. Functionally, catalyzes the transfer of a ribosyl phosphate group from 5-phosphoribose 1-diphosphate to orotate, leading to the formation of orotidine monophosphate (OMP). The sequence is that of Orotate phosphoribosyltransferase from Pseudomonas fluorescens (strain Pf0-1).